Reading from the N-terminus, the 504-residue chain is Protein Dok-7 (504 aa).

Residues 4–109 (AALVEGQVKL…WDTRIRYALG (106 aa)) form the PH domain. Residues 105-210 (RYALGEVHRF…RGISPTKGPF (106 aa)) enclose the IRS-type PTB domain. Disordered stretches follow at residues 210–232 (FGLRPVLPDPSSGGPSASEERVA), 248–348 (LSHS…HSSY), and 371–483 (SLLS…PHAG). Positions 263–280 (LSSSSSEASHSDISASSR) are enriched in low complexity. Polar residues-rich tracts occupy residues 285–297 (PEQSSSSAGTSQE), 331–341 (GRQSSSDSGIA), and 421–430 (PASQGSSDHG).

As to quaternary structure, homodimer. Forms a heterotetramer composed of 2 DOK7 and 2 MUSK molecules which facilitates MUSK trans-autophosphorylation on tyrosine residue and activation. Interacts (via IRS-type PTB domain) with MUSK (via cytoplasmic part); requires MUSK phosphorylation.

It localises to the cell membrane. Its subcellular location is the synapse. Its function is as follows. Probable muscle-intrinsic activator of MUSK that plays an essential role in neuromuscular synaptogenesis. Acts in aneural activation of MUSK and subsequent acetylcholine receptor (AchR) clustering in myotubes. Induces autophosphorylation of MUSK. In Mus musculus (Mouse), this protein is Protein Dok-7 (Dok7).